The following is a 142-amino-acid chain: Succinate dehydrogenase subunit 6, mitochondrial (142 aa).

Component of complex II composed of eight subunits in plants: four classical SDH subunits SDH1, SDH2, SDH3 and SDH4 (a flavoprotein (FP), an iron-sulfur protein (IP), and a cytochrome b composed of a large and a small subunit.), as well as four subunits unknown in mitochondria from bacteria and heterotrophic eukaryotes.

It localises to the mitochondrion inner membrane. It participates in carbohydrate metabolism; tricarboxylic acid cycle. The protein is Succinate dehydrogenase subunit 6, mitochondrial of Oryza sativa subsp. japonica (Rice).